The chain runs to 271 residues: Calretinin (271 aa).

6 EF-hand domains span residues 16–51 (LTATQFLEIWKHFDADGNGYIEGKELENFFQELEKA), 63–98 (NLGEKMKEFMQKYDKNSDGKIEMAELAQILPTEENF), 107–142 (GSSTEFMEAWRKYDTDRSGYIEANELKGFLSDLLKK), 151–186 (KLQEYTQTILRMFDLNGDGKLGLSEMSRLLPVQENF), 195–230 (LTSEEFNAIFTFYDKDGSGYIDENELDALLKDLYEK), and 235–270 (MNIQQLTSYRKSVMSLAEAEKLYRKDLEIVLCSEPP). D29, D31, N33, Y35, E40, D76, N78, D80, K82, E87, D120, D122, S124, Y126, E131, D164, N166, D168, K170, E175, D208, D210, S212, Y214, and E219 together coordinate Ca(2+). Y214 is modified (phosphotyrosine).

The protein belongs to the calbindin family.

Its subcellular location is the synapse. It localises to the cell projection. The protein resides in the dendrite. Functionally, calcium-binding protein involved in calcium homeostasis and signal transduction. It plays a critical role in buffering intracellular calcium levels and modulating calcium-dependent signaling pathways. Predominantly expressed in specific neuronal populations, influences synaptic plasticity and neuronal excitability, contributing to learning and memory. During embryonic development, it facilitates neuronal differentiation and maturation. The protein is Calretinin (CALB2) of Bos taurus (Bovine).